The following is a 495-amino-acid chain: GTPase Der (495 aa).

EngA-type G domains lie at 3 to 166 (PVVA…VQDE) and 208 to 381 (IKLA…ACAT). GTP is bound by residues 9 to 16 (GRPNVGKS), 56 to 60 (DTGGI), 118 to 121 (NKTD), 214 to 221 (GRPNVGKS), 261 to 265 (DTAGV), and 326 to 329 (NKWD). In terms of domain architecture, KH-like spans 382-466 (RRVSTAMLTR…PIRIQFKEGE (85 aa)).

Belongs to the TRAFAC class TrmE-Era-EngA-EngB-Septin-like GTPase superfamily. EngA (Der) GTPase family. In terms of assembly, associates with the 50S ribosomal subunit.

GTPase that plays an essential role in the late steps of ribosome biogenesis. The chain is GTPase Der from Pectobacterium carotovorum subsp. carotovorum (strain PC1).